Consider the following 612-residue polypeptide: DNA damage checkpoint protein 1 (612 aa).

Ser436 is subject to Phosphoserine. Residues 576–612 (GLLNSQNDTSNHKKQDNKEMEDGLGLTQVEKPRGIFD) form a disordered region. Residues 585–596 (SNHKKQDNKEME) show a composition bias toward basic and acidic residues.

This sequence belongs to the DDC1 family. In terms of assembly, component of the checkpoint clamp complex composed of DDC1, MEC3 and RAD17. The interaction with MEC3 is performed in a RAD17-dependent manner. The checkpoint clamp complex loads onto DNA in an ATP-dependent manner through its interaction with the RFC-RAD4 checkpoint clamp loader complex. Interacts with the DNA polymerase zeta subunit REV7 and DPB11. Post-translationally, phosphorylated during cell cycle S-phase and in response to DNA damage. This phosphorylation is MEC14 dependent. Also hosphorylated by CDC28.

It localises to the cytoplasm. Its subcellular location is the nucleus. In terms of biological role, component of the checkpoint clamp complex involved in the surveillance mechanism that allows the DNA repair pathways to act to restore the integrity of the DNA prior to DNA synthesis or separation of the replicated chromosomes. Associates with sites of DNA damage and modulates the MEC1 signaling pathway and the activation of RAD53 in response to DNA damage at phase G1. The complex also physically regulates DNA polymerase zeta-dependent mutagenesis by controlling the access of polymerase zeta to damaged DNA. This Saccharomyces cerevisiae (strain ATCC 204508 / S288c) (Baker's yeast) protein is DNA damage checkpoint protein 1 (DDC1).